We begin with the raw amino-acid sequence, 228 residues long: Urease accessory protein UreF (228 aa).

Belongs to the UreF family. In terms of assembly, ureD, UreF and UreG form a complex that acts as a GTP-hydrolysis-dependent molecular chaperone, activating the urease apoprotein by helping to assemble the nickel containing metallocenter of UreC. The UreE protein probably delivers the nickel.

Its subcellular location is the cytoplasm. Required for maturation of urease via the functional incorporation of the urease nickel metallocenter. This Prochlorococcus marinus (strain MIT 9215) protein is Urease accessory protein UreF.